Reading from the N-terminus, the 65-residue chain is Large ribosomal subunit protein bL35 (65 aa).

The protein belongs to the bacterial ribosomal protein bL35 family.

The protein is Large ribosomal subunit protein bL35 of Methylobacillus flagellatus (strain ATCC 51484 / DSM 6875 / VKM B-1610 / KT).